A 1430-amino-acid polypeptide reads, in one-letter code: MGARASVLSGGKLDAWEKIRLKPGGKKRYRLKHLVWASRELERFALNPSLLETTEGCKKIIGQLQSSLQTGSEELKSLYNAVVVLYYVHQRIDVRDTKEALDKLQEEQDKSQQKEQQKAADKEVSQNYPIVQNIQGQMVHQALSPRTLNAWVKVIEEKAFSPEVIPMFSALSEGATPQDLNTMLNTVGGHQAAMQMLKDTINEEAAEWDRLHPVHAGPIPPGQMREPRGSDIAGTTSTLQEQITWMTGNPPVPVGEIYKRWIILGLNKIVRMYSPVSILDIKQGPKEPFRDYVDRFFKTLRAEQATQEVKNWMTETLLVQNSNPDCKTILKALGPGATLEEMMTACQGVGGPGHKARILAEAMSKATSTAIMMQKSNFKGQKRIVKCFNCGKEGHIARNCRAPRKKGCWKCGKEGHQMKDCTERQANFFRENLAFQQGEARKFSSEQTRANSPASRELRVRRGDNPLPEAGAERRGTGSSLSFPQITLWQRPLVAIRVGGQLREALLDTGADDTVLEDINLPGKWKPKMIGGIGGFIKVRQYDQIPIEICGQKAIGTVLVGPTPVNIIGRNLLTQLGCTLNFPISPIETVPVKLKPGMDGPRVKQWPLTEEKIKALTEICTEMEKEGKISKIGPENPYNTPVFAIKKKDSTKWRKLVDFRELNKRTQDFWEVQLGIPHPAGLKKKKSVTVLDVGDAYFSVPLDKEFRKYTAFTIPSINNETPGIRYQYNVLPQGWKGSPAIFQCSMTKILEPFRAKNPEIVIYQYMDDLYVGSDLEIGQHRTKIEELREHLLKWGFTTPDKKHQKEPPFLWMGYELHPDKWTVQPIQLPEKSSWTVNDIQKLVGKLNWASQIYPGIRIKHLCRLLRGAKALTDVVPLTAEAELELAENREIIKEPVHGVYYDPSKDLIAEIQKQGHDQWTYQIYQEPYKNLKTGKYAKRKSAHTNDVKQLTEVVQKIATESIVIWGKIPKFRLPIQKETWEIWWTEYWQATWIPEWEFVNTPPLVKLWYQLETEPIAGAETFYVDGAANRETKLGKAGYVTDRGRQKVVPLTETTNQKTELQAIHLALQDSGSEVNIVTDSQYALGIIQAQPDKSESELVNQIIEQLIQKEKVYLSWVPAHKGIGGNEQVDKLVSSGIRKVLFLDGIDKAQEEHEKYHNNWRAMASDFNLPPVVAKEIVANCDKCQLKGEAMHGQVDCSPGIWQLDCTHLEGKIILVAVHVASGYIEAEVIPAETGQETAYFILKLAGRWPVKIIHTDNGSNFTSTVVKAACWWAGIQQEFGVPYNPQSQGVVESMNKELKKIIGQIRDQAEHLKTAVQMAVFIHNFKRKGGIGGYSAGERIIDIIATDIQTKELQKQITKIQNFRVYFRDSRDPVWKGPAKLLWKGEGAVVIQDNNEIKVVPRRKAKIIRDYGKQMAGDDCVAGRQDED.

Gly-2 carries N-myristoyl glycine; by host lipidation. The segment at 7 to 31 is interaction with Gp41; it reads VLSGGKLDAWEKIRLKPGGKKRYRL. Residues 8-43 are interaction with host CALM1; it reads LSGGKLDAWEKIRLKPGGKKRYRLKHLVWASRELER. Positions 12 to 19 are interaction with host AP3D1; the sequence is KLDAWEKI. The segment at 14–33 is interaction with membrane phosphatidylinositol 4,5-bisphosphate and RNA; that stretch reads DAWEKIRLKPGGKKRYRLKH. The Nuclear export signal motif lies at 16-22; the sequence is WEKIRLK. Residues 26–32 carry the Nuclear localization signal motif; that stretch reads KKRYRLK. An interaction with membrane phosphatidylinositol 4,5-bisphosphate region spans residues 73 to 77; sequence EELKS. Positions 105-124 are disordered; that stretch reads QEEQDKSQQKEQQKAADKEV. A Phosphotyrosine; by host modification is found at Tyr-128. An interaction with human PPIA/CYPA and NUP153 region spans residues 185–223; sequence NTVGGHQAAMQMLKDTINEEAAEWDRLHPVHAGPIPPGQ. The segment at 273 to 359 is dimerization/Multimerization of capsid protein p24; the sequence is YSPVSILDIK…GGPGHKARIL (87 aa). 2 CCHC-type zinc fingers span residues 385 to 402 and 406 to 423; these read VKCF…NCRA and KGCW…DCTE. Residues 440–479 form a disordered region; sequence ARKFSSEQTRANSPASRELRVRRGDNPLPEAGAERRGTGS. Polar residues predominate over residues 445 to 454; sequence SEQTRANSPA. The tract at residues 484 to 488 is dimerization of protease; it reads PQITL. The region spanning 503–572 is the Peptidase A2 domain; sequence REALLDTGAD…TPVNIIGRNL (70 aa). The active-site For protease activity; shared with dimeric partner is Asp-508. Dimerization of protease regions lie at residues 532–538 and 571–583; these read GIGGFIK and NLLT…LNFP. In terms of domain architecture, Reverse transcriptase spans 626–816; it reads EGKISKIGPE…PPFLWMGYEL (191 aa). Positions 692, 767, and 768 each coordinate Mg(2+). The RT 'primer grip' stretch occupies residues 809-817; sequence FLWMGYELH. The Tryptophan repeat motif motif lies at 980–996; sequence WEIWWTEYWQATWIPEW. Residues 1016–1139 enclose the RNase H type-1 domain; that stretch reads IAGAETFYVD…VDKLVSSGIR (124 aa). Mg(2+) contacts are provided by Asp-1025, Glu-1060, Asp-1080, and Asp-1131. Residues 1145–1186 form an Integrase-type zinc finger; that stretch reads DGIDKAQEEHEKYHNNWRAMASDFNLPPVVAKEIVANCDKCQ. Residues His-1154, His-1158, Cys-1182, and Cys-1185 each coordinate Zn(2+). The region spanning 1196–1346 is the Integrase catalytic domain; it reads VDCSPGIWQL…SAGERIIDII (151 aa). Positions 1206, 1258, and 1294 each coordinate Mg(2+). A DNA-binding region (integrase-type) is located at residues 1365–1412; the sequence is FRVYFRDSRDPVWKGPAKLLWKGEGAVVIQDNNEIKVVPRRKAKIIRD.

Homotrimer; further assembles as hexamers of trimers. Interacts with gp41 (via C-terminus). Interacts with host CALM1; this interaction induces a conformational change in the Matrix protein, triggering exposure of the myristate group. Interacts with host AP3D1; this interaction allows the polyprotein trafficking to multivesicular bodies during virus assembly. Part of the pre-integration complex (PIC) which is composed of viral genome, matrix protein, Vpr and integrase. In terms of assembly, homodimer; the homodimer further multimerizes as homohexamers or homopentamers. Interacts with human PPIA/CYPA; This interaction stabilizes the capsid. Interacts with human NUP153. Interacts with host PDZD8; this interaction stabilizes the capsid. Interacts with monkey TRIM5; this interaction destabilizes the capsid. As to quaternary structure, homodimer, whose active site consists of two apposed aspartic acid residues. Heterodimer of p66 RT and p51 RT (RT p66/p51). Heterodimerization of RT is essential for DNA polymerase activity. The overall folding of the subdomains is similar in p66 RT and p51 RT but the spatial arrangements of the subdomains are dramatically different. In terms of assembly, homotetramer; may further associate as a homohexadecamer. Part of the pre-integration complex (PIC) which is composed of viral genome, matrix protein, Vpr and integrase. Interacts with human SMARCB1/INI1 and human PSIP1/LEDGF isoform 1. Interacts with human KPNA3; this interaction might play a role in nuclear import of the pre-integration complex. Interacts with human NUP153; this interaction might play a role in nuclear import of the pre-integration complex. Requires Mg(2+) as cofactor. In terms of processing, specific enzymatic cleavages by the viral protease yield mature proteins. The protease is released by autocatalytic cleavage. The polyprotein is cleaved during and after budding, this process is termed maturation. Proteolytic cleavage of p66 RT removes the RNase H domain to yield the p51 RT subunit. Nucleocapsid protein p7 might be further cleaved after virus entry. Post-translationally, tyrosine phosphorylated presumably in the virion by a host kinase. Phosphorylation is apparently not a major regulator of membrane association. Phosphorylated possibly by host MAPK1; this phosphorylation is necessary for Pin1-mediated virion uncoating. In terms of processing, methylated by host PRMT6, impairing its function by reducing RNA annealing and the initiation of reverse transcription.

The protein localises to the host cell membrane. Its subcellular location is the host endosome. It is found in the host multivesicular body. The protein resides in the virion membrane. It localises to the host nucleus. The protein localises to the host cytoplasm. Its subcellular location is the virion. The enzyme catalyses Specific for a P1 residue that is hydrophobic, and P1' variable, but often Pro.. It carries out the reaction Endohydrolysis of RNA in RNA/DNA hybrids. Three different cleavage modes: 1. sequence-specific internal cleavage of RNA. Human immunodeficiency virus type 1 and Moloney murine leukemia virus enzymes prefer to cleave the RNA strand one nucleotide away from the RNA-DNA junction. 2. RNA 5'-end directed cleavage 13-19 nucleotides from the RNA end. 3. DNA 3'-end directed cleavage 15-20 nucleotides away from the primer terminus.. It catalyses the reaction 3'-end directed exonucleolytic cleavage of viral RNA-DNA hybrid.. The catalysed reaction is DNA(n) + a 2'-deoxyribonucleoside 5'-triphosphate = DNA(n+1) + diphosphate. With respect to regulation, protease: The viral protease is inhibited by many synthetic protease inhibitors (PIs), such as amprenavir, atazanavir, indinavir, loprinavir, nelfinavir, ritonavir and saquinavir. Use of protease inhibitors in tritherapy regimens permit more ambitious therapeutic strategies. Reverse transcriptase/ribonuclease H: RT can be inhibited either by nucleoside RT inhibitors (NRTIs) or by non nucleoside RT inhibitors (NNRTIs). NRTIs act as chain terminators, whereas NNRTIs inhibit DNA polymerization by binding a small hydrophobic pocket near the RT active site and inducing an allosteric change in this region. Classical NRTIs are abacavir, adefovir (PMEA), didanosine (ddI), lamivudine (3TC), stavudine (d4T), tenofovir (PMPA), zalcitabine (ddC), and zidovudine (AZT). Classical NNRTIs are atevirdine (BHAP U-87201E), delavirdine, efavirenz (DMP-266), emivirine (I-EBU), and nevirapine (BI-RG-587). The tritherapies used as a basic effective treatment of AIDS associate two NRTIs and one NNRTI. Mediates, with Gag polyprotein, the essential events in virion assembly, including binding the plasma membrane, making the protein-protein interactions necessary to create spherical particles, recruiting the viral Env proteins, and packaging the genomic RNA via direct interactions with the RNA packaging sequence (Psi). Gag-Pol polyprotein may regulate its own translation, by the binding genomic RNA in the 5'-UTR. At low concentration, the polyprotein would promote translation, whereas at high concentration, the polyprotein would encapsidate genomic RNA and then shut off translation. Functionally, targets the polyprotein to the plasma membrane via a multipartite membrane-binding signal, that includes its myristoylated N-terminus. Matrix protein is part of the pre-integration complex. Implicated in the release from host cell mediated by Vpu. Binds to RNA. Its function is as follows. Forms the conical core that encapsulates the genomic RNA-nucleocapsid complex in the virion. Most core are conical, with only 7% tubular. The core is constituted by capsid protein hexamer subunits. The core is disassembled soon after virion entry. Host restriction factors such as TRIM5-alpha or TRIMCyp bind retroviral capsids and cause premature capsid disassembly, leading to blocks in reverse transcription. Capsid restriction by TRIM5 is one of the factors which restricts HIV-1 to the human species. Host PIN1 apparently facilitates the virion uncoating. On the other hand, interactions with PDZD8 or CYPA stabilize the capsid. In terms of biological role, encapsulates and protects viral dimeric unspliced genomic RNA (gRNA). Binds these RNAs through its zinc fingers. Acts as a nucleic acid chaperone which is involved in rearangement of nucleic acid secondary structure during gRNA retrotranscription. Also facilitates template switch leading to recombination. As part of the polyprotein, participates in gRNA dimerization, packaging, tRNA incorporation and virion assembly. Aspartyl protease that mediates proteolytic cleavages of Gag and Gag-Pol polyproteins during or shortly after the release of the virion from the plasma membrane. Cleavages take place as an ordered, step-wise cascade to yield mature proteins. This process is called maturation. Displays maximal activity during the budding process just prior to particle release from the cell. Also cleaves Nef and Vif, probably concomitantly with viral structural proteins on maturation of virus particles. Hydrolyzes host EIF4GI and PABP1 in order to shut off the capped cellular mRNA translation. The resulting inhibition of cellular protein synthesis serves to ensure maximal viral gene expression and to evade host immune response. Also mediates cleavage of host YTHDF3. Mediates cleavage of host CARD8, thereby activating the CARD8 inflammasome, leading to the clearance of latent HIV-1 in patient CD4(+) T-cells after viral reactivation; in contrast, HIV-1 can evade CARD8-sensing when its protease remains inactive in infected cells prior to viral budding. Functionally, multifunctional enzyme that converts the viral RNA genome into dsDNA in the cytoplasm, shortly after virus entry into the cell. This enzyme displays a DNA polymerase activity that can copy either DNA or RNA templates, and a ribonuclease H (RNase H) activity that cleaves the RNA strand of RNA-DNA heteroduplexes in a partially processive 3' to 5' endonucleasic mode. Conversion of viral genomic RNA into dsDNA requires many steps. A tRNA(3)-Lys binds to the primer-binding site (PBS) situated at the 5'-end of the viral RNA. RT uses the 3' end of the tRNA primer to perform a short round of RNA-dependent minus-strand DNA synthesis. The reading proceeds through the U5 region and ends after the repeated (R) region which is present at both ends of viral RNA. The portion of the RNA-DNA heteroduplex is digested by the RNase H, resulting in a ssDNA product attached to the tRNA primer. This ssDNA/tRNA hybridizes with the identical R region situated at the 3' end of viral RNA. This template exchange, known as minus-strand DNA strong stop transfer, can be either intra- or intermolecular. RT uses the 3' end of this newly synthesized short ssDNA to perform the RNA-dependent minus-strand DNA synthesis of the whole template. RNase H digests the RNA template except for two polypurine tracts (PPTs) situated at the 5'-end and near the center of the genome. It is not clear if both polymerase and RNase H activities are simultaneous. RNase H probably can proceed both in a polymerase-dependent (RNA cut into small fragments by the same RT performing DNA synthesis) and a polymerase-independent mode (cleavage of remaining RNA fragments by free RTs). Secondly, RT performs DNA-directed plus-strand DNA synthesis using the PPTs that have not been removed by RNase H as primers. PPTs and tRNA primers are then removed by RNase H. The 3' and 5' ssDNA PBS regions hybridize to form a circular dsDNA intermediate. Strand displacement synthesis by RT to the PBS and PPT ends produces a blunt ended, linear dsDNA copy of the viral genome that includes long terminal repeats (LTRs) at both ends. Its function is as follows. Catalyzes viral DNA integration into the host chromosome, by performing a series of DNA cutting and joining reactions. This enzyme activity takes place after virion entry into a cell and reverse transcription of the RNA genome in dsDNA. The first step in the integration process is 3' processing. This step requires a complex comprising the viral genome, matrix protein, Vpr and integrase. This complex is called the pre-integration complex (PIC). The integrase protein removes 2 nucleotides from each 3' end of the viral DNA, leaving recessed CA OH's at the 3' ends. In the second step, the PIC enters cell nucleus. This process is mediated through integrase and Vpr proteins, and allows the virus to infect a non dividing cell. This ability to enter the nucleus is specific of lentiviruses, other retroviruses cannot and rely on cell division to access cell chromosomes. In the third step, termed strand transfer, the integrase protein joins the previously processed 3' ends to the 5' ends of strands of target cellular DNA at the site of integration. The 5'-ends are produced by integrase-catalyzed staggered cuts, 5 bp apart. A Y-shaped, gapped, recombination intermediate results, with the 5'-ends of the viral DNA strands and the 3' ends of target DNA strands remaining unjoined, flanking a gap of 5 bp. The last step is viral DNA integration into host chromosome. This involves host DNA repair synthesis in which the 5 bp gaps between the unjoined strands are filled in and then ligated. Since this process occurs at both cuts flanking the HIV genome, a 5 bp duplication of host DNA is produced at the ends of HIV-1 integration. Alternatively, Integrase may catalyze the excision of viral DNA just after strand transfer, this is termed disintegration. This chain is Gag-Pol polyprotein (gag-pol), found in Human immunodeficiency virus type 1 group M subtype F2 (isolate MP255) (HIV-1).